Reading from the N-terminus, the 430-residue chain is Trigger factor (430 aa).

The region spanning 163 to 248 (GDVVDVDYKG…LNSIKTSILP (86 aa)) is the PPIase FKBP-type domain.

This sequence belongs to the FKBP-type PPIase family. Tig subfamily.

The protein localises to the cytoplasm. The catalysed reaction is [protein]-peptidylproline (omega=180) = [protein]-peptidylproline (omega=0). Functionally, involved in protein export. Acts as a chaperone by maintaining the newly synthesized protein in an open conformation. Functions as a peptidyl-prolyl cis-trans isomerase. The sequence is that of Trigger factor from Lawsonia intracellularis (strain PHE/MN1-00).